A 510-amino-acid chain; its full sequence is Inositol-3-phosphate synthase (510 aa).

NAD(+)-binding residues include glycine 70, glycine 71, asparagine 72, asparagine 73, aspartate 143, isoleucine 180, glutamine 190, arginine 193, threonine 230, alanine 231, asparagine 232, threonine 233, glycine 281, serine 282, aspartate 306, serine 309, asparagine 340, asparagine 341, aspartate 342, lysine 355, glycine 393, aspartate 394, aspartate 422, and serine 423.

It belongs to the myo-inositol 1-phosphate synthase family. NAD(+) serves as cofactor.

The protein localises to the cytoplasm. The protein resides in the cytosol. It is found in the nucleus. The catalysed reaction is D-glucose 6-phosphate = 1D-myo-inositol 3-phosphate. It functions in the pathway polyol metabolism; myo-inositol biosynthesis; myo-inositol from D-glucose 6-phosphate: step 1/2. Its function is as follows. Key enzyme in myo-inositol biosynthesis pathway that catalyzes the conversion of glucose 6-phosphate to 1-myo-inositol 1-phosphate in a NAD-dependent manner. This is Inositol-3-phosphate synthase (INPS1) from Nicotiana paniculata.